We begin with the raw amino-acid sequence, 213 residues long: Cytidylate kinase (213 aa).

Residue 7 to 15 (GPAASGKGT) participates in ATP binding.

It belongs to the cytidylate kinase family. Type 1 subfamily.

Its subcellular location is the cytoplasm. The catalysed reaction is CMP + ATP = CDP + ADP. It carries out the reaction dCMP + ATP = dCDP + ADP. The chain is Cytidylate kinase from Rhodospirillum rubrum (strain ATCC 11170 / ATH 1.1.1 / DSM 467 / LMG 4362 / NCIMB 8255 / S1).